Reading from the N-terminus, the 649-residue chain is Quinol oxidase subunit 1 (649 aa).

The Extracellular portion of the chain corresponds to methionine 1–leucine 15. A helical transmembrane segment spans residues isoleucine 16–leucine 34. Residues threonine 35–leucine 56 are Cytoplasmic-facing. Residues glycine 57–glycine 75 form a helical membrane-spanning segment. At leucine 76–glutamate 97 the chain is on the extracellular side. Residues isoleucine 98–glycine 117 traverse the membrane as a helical segment. Residue histidine 102 coordinates Fe(II)-heme a. The Cytoplasmic segment spans residues leucine 118–asparagine 139. Residues leucine 140–valine 157 traverse the membrane as a helical segment. The Extracellular segment spans residues isoleucine 158–leucine 190. Residues glutamine 191–leucine 209 traverse the membrane as a helical segment. Residues lysine 210–threonine 227 are Cytoplasmic-facing. Residues threonine 228–leucine 246 form a helical membrane-spanning segment. Over alanine 247–alanine 272 the chain is Extracellular. A helical membrane pass occupies residues asparagine 273–glycine 292. Histidine 280 and tyrosine 284 together coordinate Cu cation. A cross-link (1'-histidyl-3'-tyrosine (His-Tyr)) is located at residues histidine 280–tyrosine 284. The Cytoplasmic portion of the chain corresponds to isoleucine 293–serine 315. Residues isoleucine 316–glycine 335 form a helical membrane-spanning segment. Cu cation is bound by residues histidine 329 and histidine 330. At asparagine 336–phenylalanine 343 the chain is on the extracellular side. The helical transmembrane segment at phenylalanine 344–tryptophan 362 threads the bilayer. Topologically, residues leucine 363–methionine 377 are cytoplasmic. A helical membrane pass occupies residues leucine 378–leucine 397. Residues alanine 398–glutamine 405 are Extracellular-facing. A helical membrane pass occupies residues tyrosine 406 to valine 425. Histidine 415 provides a ligand contact to heme a3. Position 417 (histidine 417) interacts with Fe(II)-heme a. The Cytoplasmic portion of the chain corresponds to phenylalanine 426–phenylalanine 452. The chain crosses the membrane as a helical span at residues phenylalanine 453–leucine 472. The Extracellular segment spans residues glutamine 473 to threonine 490. The helical transmembrane segment at leucine 491–cysteine 510 threads the bilayer. Topologically, residues tyrosine 511–serine 584 are cytoplasmic. A helical membrane pass occupies residues asparagine 585–valine 604. At phenylalanine 605 to methionine 610 the chain is on the extracellular side. Residues glycine 611–asparagine 631 traverse the membrane as a helical segment. The Cytoplasmic portion of the chain corresponds to glycine 632–glutamate 649.

The protein belongs to the heme-copper respiratory oxidase family. It depends on Cu cation as a cofactor. The cofactor is ferriheme a. Requires Heme A3. as cofactor.

The protein resides in the cell membrane. The enzyme catalyses 2 a quinol + O2 = 2 a quinone + 2 H2O. It functions in the pathway energy metabolism; oxidative phosphorylation. Functionally, catalyzes quinol oxidation with the concomitant reduction of oxygen to water. Major component for energy conversion during vegetative growth. The protein is Quinol oxidase subunit 1 (qoxB) of Bacillus subtilis (strain 168).